The chain runs to 1193 residues: Pyruvate carboxylase (1193 aa).

The 453-residue stretch at Gln41–Glu493 folds into the Biotin carboxylation domain. ATP is bound by residues Lys159, Glu243, and His278. The region spanning Arg163–Ala360 is the ATP-grasp domain. Residue Arg335 is part of the active site. Positions Cys579–Arg847 constitute a Pyruvate carboxyltransferase domain. Substrate-binding positions include Arg587 to Gln591 and Arg660. Asp588 serves as a coordination point for a divalent metal cation. A divalent metal cation is bound by residues Lys756, His786, and His788. At Lys756 the chain carries N6-carboxylysine. Thr921 is a binding site for substrate. The region spanning Lys1116–Thr1191 is the Biotinyl-binding domain. An N6-biotinyllysine modification is found at Lys1157.

It depends on biotin as a cofactor. The cofactor is Zn(2+).

It is found in the cytoplasm. It carries out the reaction hydrogencarbonate + pyruvate + ATP = oxaloacetate + ADP + phosphate + H(+). The protein operates within carbohydrate biosynthesis; gluconeogenesis. Functionally, pyruvate carboxylase catalyzes a 2-step reaction, involving the ATP-dependent carboxylation of the covalently attached biotin in the first step and the transfer of the carboxyl group to pyruvate in the second. The protein is Pyruvate carboxylase (pyc) of Aspergillus terreus (strain NIH 2624 / FGSC A1156).